A 61-amino-acid chain; its full sequence is Metallothionein-1A (61 aa).

Met1 is subject to N-acetylmethionine. The interval 1-29 (MDPNCSCATGGSCTCTGSCKCKECKCTSC) is beta. 18 residues coordinate a divalent metal cation: Cys5, Cys7, Cys13, Cys15, Cys19, Cys21, Cys24, Cys26, Cys29, Cys33, Cys34, Cys36, Cys37, Cys41, Cys44, Cys48, Cys50, and Cys57. The segment at 30 to 61 (KKSCCSCCPMSCAKCAQGCICKGASEKCSCCA) is alpha. Ser58 carries the post-translational modification Phosphoserine. Cys59 and Cys60 together coordinate a divalent metal cation.

The protein belongs to the metallothionein superfamily. Type 1 family. In terms of assembly, monomer.

Its function is as follows. Metallothioneins have a high content of cysteine residues that bind various heavy metals; these proteins are transcriptionally regulated by both heavy metals and glucocorticoids. This chain is Metallothionein-1A (MT1A), found in Homo sapiens (Human).